A 528-amino-acid polypeptide reads, in one-letter code: MSYNNGNTYSKSYSRNNKRPLFGKRSPNPQSLARPPPPKRIRTDSGYQSNMDNISSHRVNSNDQPGHTKSRGNNNLSRYNDTSFQTSSRYQGSRYNNNNTSYENRPKSIKRDETKAEFLSHLPKGPKSVEKSRYNNSSNTSNDIKNGYHASKYYNHKGQEGRSVIAKKVPVSVLTQQRSTSVYLRIMQVGEGTYGKVYKAKNTNTEKLVALKKLRLQGEREGFPITSIREIKLLQSFDHPNVSTIKEIMVESQKTVYMIFEYADNDLSGLLLNKEVQISHSQCKHLFKQLLLGMEYLHDNKILHRDVKGSNILIDNQGNLKITDFGLARKMNSRADYTNRVITLWYRPPELLLGTTNYGTEVDMWGCGCLLVELFNKTAIFQGSNELEQIESIFKIMGTPTINSWPTLYDMPWFFMIMPQQTTKYVNNFSEKFKSVLPSSKCLQLAINLLCYDQTKRFSATEALQSDYFKEEPKPEPLVLDGLVSCHEYEVKLARKQKRPNILSTNTNNKGNGNSNNNNNNNNDDDDK.

The segment covering Met1–Arg15 has biased composition (polar residues). Positions Met1 to Tyr148 are disordered. Residue Ser14 is modified to Phosphoserine; by autocatalysis. The short motif at Pro37 to Asp44 is the Nuclear localization signal element. Positions Ser45 to Glu103 are enriched in polar residues. Over residues Asn104–Phe118 the composition is skewed to basic and acidic residues. Positions Tyr134 to Ile144 are enriched in polar residues. The 287-residue stretch at Tyr183 to Phe469 folds into the Protein kinase domain. Residues Val189 to Val197 and Lys212 each bind ATP. Asp306 (proton acceptor) is an active-site residue. Thr338 is modified (phosphothreonine). The disordered stretch occupies residues Gln497–Lys528. Positions Ser504–Asn522 are enriched in low complexity.

The protein belongs to the protein kinase superfamily. CMGC Ser/Thr protein kinase family. CDC2/CDKX subfamily. In terms of assembly, CTDK-I consists of three subunits, CTK1, CTK2 and CTK3 (also called alpha, beta and gamma). Interacts directly with the CTK2 and CTK3 subunits, this interaction is required for kinase activity. Interacts with RNA polymerase I. Interacts with SNF1, but only at low glucose concentrations. Interacts with translating ribosomes. In terms of processing, phosphorylated on Thr-338 by CAK1. Phosphorylation is essential for the elevated CTD Ser-2 phosphorylation and required to activate transcription of stationary-phase genes during the diauxic shift.

It localises to the nucleus. The protein resides in the nucleolus. The protein localises to the cytoplasm. It catalyses the reaction [DNA-directed RNA polymerase] + ATP = phospho-[DNA-directed RNA polymerase] + ADP + H(+). In terms of biological role, catalytic subunit of the CTDK-I complex, which hyperphosphorylates the C-terminal heptapeptide repeat domain (CTD) of the largest RNA polymerase II subunit. CTDK-I phosphorylates 'Ser-5' if the CTD substrate is not phosphorylated at 'Ser-5', but will phosphorylate 'Ser-2' of a CTD substrate if 'Ser-5' is already phosphorylated. CTDK-I is also more reactive toward substrates that are prephosphorylated at 'Ser-2' or 'Ser-5' compared with an unphosphorylated CTD substrate, therefore efficiently creating doubly phosphorylated CTD repeats. Involved in RNA polymerase II transcriptional elongation, and through PTI1, pre-mRNA 3'-end processing. Participates in both positive and negative regulation of CTD phosphorylation. Required for DNA damage induced transcription, including the expression of the RNR genes, and reprogramming of gene expression upon amino acid starvation. Required for SET2 mediated H3K36 methylation. Also regulates H3K4 methylation. Controls the maintenance of suppressive chromatin in the coding regions of genes by both promoting H3K36 methylation, which leads to histone deacetylation, and catalyzing phosphorylation of the CTD required to localize H3K4 chromatin modification specifically to the 5' ends of genes, thereby creating a boundary for H3K4 methylation that prevents a mark associated with transcriptional initiation from spreading into the bodies of genes. Involved in RNA polymerase I transcription. Involved in telomere maintenance. Acts together with SNF1 to induce GSY2 transcription in response to glucose limitation. Involved in the adaptation to alternative carbon sources, including galactose, glycerol and ethanol, but not raffinose. Required for the integrity of the rDNA locus. Functions in translation elongation by enhancing decoding fidelity. Needed for translational accuracy by phosphorylating RPS2. This Saccharomyces cerevisiae (strain ATCC 204508 / S288c) (Baker's yeast) protein is CTD kinase subunit alpha (CTK1).